The sequence spans 796 residues: MASKTKASEALKVVARCRPLSRKEEAAGHEQILTMDVKLGQVTLRNPRAAPGELPKTFTFDAVYDASSKQADLYDETVRPLIDSVLQGFNGTVFAYGQTGTGKTYTMQGTWVEPELRGVIPNAFEHIFTHISRSQNQQYLVRASYLEIYQEEIRDLLSKEPGKRLELKENPETGVYIKDLSSFVTKNVKEIEHVMNLGNQARAVGSTHMNEVSSRSHAIFVITVECSERGSDGQDHIRVGKLNLVDLAGSERQNKAGPNAAGGPATQPTAGGGSGSGSASGSASSGERPKEASKINLSLSALGNVIAALAGNRSTHIPYRDSKLTRLLQDSLGGNAKTIMVATLGPASHSYDESLSTLRFANRAKNIKNKPRVNEDPKDTLLREFQEEIARLKAQLEKKGMLGKRPRRKSSRRKKAVSAPAGYPEGSVIEAWVAEEEDDNNNNHHPPQPILEAALEKNMENYLQDQKERLEEEKAAIQDDRSLVSEEKQKLLEEKEKMLEDLRREQQATELLAAKYKAMESKLLIGGRNIMDHTNEQQKMLELKRQEIAEQKRREREMQQEMLLRDEETMELRGTYSSLQQEVEVKTKKLKKLYAKLQAVKAEIQDQHEEYIRVRQDLEEAQNEQTRELKLKYLIIENFIPPEEKNKIMNRLFLDCEEEQWRFQPLVPAGVNNSQMKKRPTSAVGYKRPISQYARVAMAMGSHPRYRAENIMFLELDVSPPAIFEMEFSHDQEQDPRVLHMERLMRLDSFLERPSTTKVRKSRSWCQSPQRMPPPSTAHASMTSVPLHPATVVDHD.

A Kinesin motor domain is found at 10-367 (ALKVVARCRP…LRFANRAKNI (358 aa)). 97-104 (GQTGTGKT) is an ATP binding site. Disordered regions lie at residues 252 to 292 (RQNK…PKEA), 397 to 422 (EKKG…APAG), and 758 to 796 (KVRK…VDHD). Positions 256–269 (AGPNAAGGPATQPT) are enriched in low complexity. A coiled-coil region spans residues 378-632 (KDTLLREFQE…NEQTRELKLK (255 aa)). Over residues 401–416 (MLGKRPRRKSSRRKKA) the composition is skewed to basic residues. Positions 633 to 793 (YLIIENFIPP…SVPLHPATVV (161 aa)) are globular.

It belongs to the TRAFAC class myosin-kinesin ATPase superfamily. Kinesin family. Kinesin II subfamily. In terms of assembly, heterodimer of KIF3A and KIF3C.

It localises to the cytoplasm. Its subcellular location is the cytoskeleton. Functionally, microtubule-based anterograde translocator for membranous organelles. In Mus musculus (Mouse), this protein is Kinesin-like protein KIF3C (Kif3c).